A 644-amino-acid polypeptide reads, in one-letter code: Threonine--tRNA ligase (644 aa).

In terms of domain architecture, TGS spans 1–61 (MKVSIEGSVV…TACETLEPVY (61 aa)). Residues 241–532 (DHRKLGTQLD…LTEHFAGAFP (292 aa)) are catalytic. Zn(2+) contacts are provided by cysteine 333, histidine 384, and histidine 509.

This sequence belongs to the class-II aminoacyl-tRNA synthetase family. As to quaternary structure, homodimer. Requires Zn(2+) as cofactor.

The protein resides in the cytoplasm. It catalyses the reaction tRNA(Thr) + L-threonine + ATP = L-threonyl-tRNA(Thr) + AMP + diphosphate + H(+). Its function is as follows. Catalyzes the attachment of threonine to tRNA(Thr) in a two-step reaction: L-threonine is first activated by ATP to form Thr-AMP and then transferred to the acceptor end of tRNA(Thr). Also edits incorrectly charged L-seryl-tRNA(Thr). This is Threonine--tRNA ligase from Oleidesulfovibrio alaskensis (strain ATCC BAA-1058 / DSM 17464 / G20) (Desulfovibrio alaskensis).